The chain runs to 325 residues: Hydroxymethylglutaryl-CoA lyase, mitochondrial (325 aa).

The N-terminal 27 residues, 1-27 (MAAMRKALPRRLVGLASLRAVSTSSMG), are a transit peptide targeting the mitochondrion. The 268-residue stretch at 33–300 (VKIVEVGPRD…HTGVNLQKLL (268 aa)) folds into the Pyruvate carboxyltransferase domain. R41 provides a ligand contact to substrate. D42 provides a ligand contact to a divalent metal cation. At K48 the chain carries N6-acetyllysine; alternate. The residue at position 48 (K48) is an N6-succinyllysine; alternate. Position 111 is an N6-acetyllysine (K111). An N6-acetyllysine; alternate mark is found at K137 and K179. K137 and K179 each carry N6-succinyllysine; alternate. Residues H233 and H235 each coordinate a divalent metal cation. The active site involves C266. N275 contacts a divalent metal cation. Residues 323–325 (CKL) carry the Microbody targeting signal motif. K324 is subject to N6-acetyllysine.

The protein belongs to the HMG-CoA lyase family. Homodimer; disulfide-linked. Can also form homotetramers. A divalent metal cation serves as cofactor. In terms of tissue distribution, highest expression in liver. Expressed in pancreas, kidney, intestine, testis, fibroblasts and lymphoblasts. Very low expression in brain and skeletal muscle. The relative expression of isoform 2 (at mRNA level) is highest in heart (30%), skeletal muscle (22%), and brain (14%).

It is found in the mitochondrion matrix. Its subcellular location is the peroxisome. It catalyses the reaction (3S)-3-hydroxy-3-methylglutaryl-CoA = acetoacetate + acetyl-CoA. It functions in the pathway metabolic intermediate metabolism; (S)-3-hydroxy-3-methylglutaryl-CoA degradation; acetoacetate from (S)-3-hydroxy-3-methylglutaryl-CoA: step 1/1. Stimulated by reducing agents such as dithiothreitol (DTT). In terms of biological role, mitochondrial 3-hydroxy-3-methylglutaryl-CoA lyase that catalyzes a cation-dependent cleavage of (S)-3-hydroxy-3-methylglutaryl-CoA into acetyl-CoA and acetoacetate, a key step in ketogenesis. Terminal step in leucine catabolism. Ketone bodies (beta-hydroxybutyrate, acetoacetate and acetone) are essential as an alternative source of energy to glucose, as lipid precursors and as regulators of metabolism. The chain is Hydroxymethylglutaryl-CoA lyase, mitochondrial (HMGCL) from Homo sapiens (Human).